Reading from the N-terminus, the 505-residue chain is 2,3-bisphosphoglycerate-independent phosphoglycerate mutase (505 aa).

Positions 12 and 62 each coordinate Mn(2+). The Phosphoserine intermediate role is filled by Ser62. Substrate-binding positions include His123, 153–154, Arg185, Arg191, 257–260, and Lys330; these read RD and RPDR. Positions 397, 401, 438, 439, and 456 each coordinate Mn(2+).

It belongs to the BPG-independent phosphoglycerate mutase family. In terms of assembly, monomer. It depends on Mn(2+) as a cofactor.

The enzyme catalyses (2R)-2-phosphoglycerate = (2R)-3-phosphoglycerate. Its pathway is carbohydrate degradation; glycolysis; pyruvate from D-glyceraldehyde 3-phosphate: step 3/5. In terms of biological role, catalyzes the interconversion of 2-phosphoglycerate and 3-phosphoglycerate. The protein is 2,3-bisphosphoglycerate-independent phosphoglycerate mutase of Staphylococcus saprophyticus subsp. saprophyticus (strain ATCC 15305 / DSM 20229 / NCIMB 8711 / NCTC 7292 / S-41).